The primary structure comprises 216 residues: MOB kinase activator-like 1 homolog C (216 aa).

Zn(2+)-binding residues include cysteine 78, cysteine 83, histidine 160, and histidine 165.

The protein belongs to the MOB1/phocein family.

The protein is MOB kinase activator-like 1 homolog C (mobC) of Dictyostelium discoideum (Social amoeba).